Reading from the N-terminus, the 98-residue chain is Large ribosomal subunit protein bL27 (98 aa).

A propeptide spanning residues 1-9 (MLKMNLQLF) is cleaved from the precursor.

It belongs to the bacterial ribosomal protein bL27 family. Post-translationally, the N-terminus is cleaved by ribosomal processing cysteine protease Prp.

The sequence is that of Large ribosomal subunit protein bL27 from Desulfitobacterium hafniense (strain DSM 10664 / DCB-2).